The chain runs to 244 residues: MSQFNLSELNALPKAKQAAALVLVNGQLEHLTAQERVSWALDNLPGEFVLSSSFGIQAAVCLHLVTRQRPDIPVILTDTGYLFPETYRFIDDLTEKLQLNLQVFRAAHSPAWQEARYGKLWEQGVEGIERYNTLNKVEPMNRALEALGAQTWFAGLRREQSGGRSQLPVLALQRGIFKLLPIIDWDNRQVYQYLTQHGLSYHPLWEQGYLSVGDTHTTRKWEPGMSEEETRFFGLKRECGLHEG.

Cysteine 239 functions as the Nucleophile; cysteine thiosulfonate intermediate in the catalytic mechanism.

The protein belongs to the PAPS reductase family. CysH subfamily.

It is found in the cytoplasm. It carries out the reaction [thioredoxin]-disulfide + sulfite + adenosine 3',5'-bisphosphate + 2 H(+) = [thioredoxin]-dithiol + 3'-phosphoadenylyl sulfate. It participates in sulfur metabolism; hydrogen sulfide biosynthesis; sulfite from sulfate: step 3/3. Its function is as follows. Catalyzes the formation of sulfite from phosphoadenosine 5'-phosphosulfate (PAPS) using thioredoxin as an electron donor. The protein is Phosphoadenosine 5'-phosphosulfate reductase of Yersinia pseudotuberculosis serotype O:1b (strain IP 31758).